A 382-amino-acid chain; its full sequence is Mannitol-1-phosphate 5-dehydrogenase (382 aa).

4–15 (AVHFGAGNIGRG) lines the NAD(+) pocket.

Belongs to the mannitol dehydrogenase family.

The catalysed reaction is D-mannitol 1-phosphate + NAD(+) = beta-D-fructose 6-phosphate + NADH + H(+). The polypeptide is Mannitol-1-phosphate 5-dehydrogenase (Vibrio campbellii (strain ATCC BAA-1116)).